A 347-amino-acid polypeptide reads, in one-letter code: Probable arabinogalactan endo-beta-1,4-galactanase A (347 aa).

A signal peptide spans 1–16 (MLFSYLLATLPLLANA). The active-site Proton donor is the Glu-150. Catalysis depends on Glu-260, which acts as the Nucleophile.

The protein belongs to the glycosyl hydrolase 53 family.

The protein resides in the secreted. It carries out the reaction The enzyme specifically hydrolyzes (1-&gt;4)-beta-D-galactosidic linkages in type I arabinogalactans.. Functionally, endogalactanase involved in the degradation of plant cell wall polysaccharides, and more particularly of hairy regions of pectin. This is Probable arabinogalactan endo-beta-1,4-galactanase A (galA) from Aspergillus flavus (strain ATCC 200026 / FGSC A1120 / IAM 13836 / NRRL 3357 / JCM 12722 / SRRC 167).